Consider the following 453-residue polypeptide: MIKKGTLKYKWMMITTLIMFSTIILFCLVIIFFLKDTLRDGEIDEAEHSSSEIVNLVESRSMNNITTLDLTAMLENFEKAIIYDRNGKQLMQSSNENMINFKPDIDFVDPETIQISKHNGIPYLIITEPIHSERFEGYSVLIHSLEGYNNVVRSLYFVAIAFGLLATFIMAGISYIFSTQLTKPLVTMSNKMIQIRRDGFQNKLELKTNYEETDNLIDTFNDMMYQIEESFNQQRQFVEDASHELRTPLQIIQGHLNLIQRWGKKDPAVLEESLNISLEEMNRITKLVEELLLLTKDKVNIQALEFEEVNINEEIRSRIKSLKQLHPDYQFKTHLSKKPLTLQINRHQFEQLLLIFIDNAMKYDKDNKQIEIATQLRNKQISIEITDHGLGIPKEDQEFIFDRFYRVDKSRSRSQGGNGLGLFIAEKIVQQYGGYITVDSEVNQYTTFKIIFK.

Transmembrane regions (helical) follow at residues 14–34 and 157–177; these read ITTL…IFFL and FVAI…SYIF. In terms of domain architecture, HAMP spans 179-232; sequence TQLTKPLVTMSNKMIQIRRDGFQNKLELKTNYEETDNLIDTFNDMMYQIEESFN. Positions 240–453 constitute a Histidine kinase domain; it reads DASHELRTPL…QYTTFKIIFK (214 aa). A Phosphohistidine; by autocatalysis modification is found at histidine 243.

Post-translationally, autophosphorylated.

Its subcellular location is the cell membrane. It carries out the reaction ATP + protein L-histidine = ADP + protein N-phospho-L-histidine.. Member of the two-component regulatory system ArlS/ArlR. ArlS probably functions as a sensor protein kinase which is autophosphorylated at a histidine residue and transfers its phosphate group to ArlR. The polypeptide is Signal transduction histidine-protein kinase ArlS (arlS) (Staphylococcus haemolyticus (strain JCSC1435)).